A 1163-amino-acid chain; its full sequence is Guanylate cyclase 32E (1163 aa).

An N-terminal signal peptide occupies residues Met-1–Ser-25. Topologically, residues Ala-29–Arg-469 are extracellular. 4 N-linked (GlcNAc...) asparagine glycosylation sites follow: Asn-147, Asn-206, Asn-368, and Asn-390. The chain crosses the membrane as a helical span at residues Tyr-470–Lys-490. Over His-491–Leu-1163 the chain is Cytoplasmic. The 294-residue stretch at Met-507 to Glu-800 folds into the Protein kinase domain. Positions Thr-873 to Glu-1003 constitute a Guanylate cyclase domain.

The protein belongs to the adenylyl cyclase class-4/guanylyl cyclase family.

The protein localises to the membrane. The catalysed reaction is GTP = 3',5'-cyclic GMP + diphosphate. The chain is Guanylate cyclase 32E (Gyc32E) from Drosophila melanogaster (Fruit fly).